The chain runs to 350 residues: MSDQAVVTLKDVDVEFHGKTRSVHAVDHVDLTVNRGDIYGIVGYSGAGKSTLVRTINLLQRPTGGSVNVLGQDMLALSPAQLRKERKRIGMIFQHFNLMNSRTIADNVAFPLKGLKSKQAIQKKVAELLDLVGLTDRANSYPAQLSGGQKQRVGIARALASDPEILISDEATSALDPKTTSSILELLQSLNQRLGLTIVLITHQMEAVKQICNRVAVMDDGAIIECGDLLQVFSNPQQQLTKDFIDTTLQLDQAIDAVMQQPTVKNLGPDDRLLRLTYVGDSADQPLVAKLFSSYHVTANILFGDIQILQDTPFGNLIVVLSGDHDEVESGIAYLKQQDVKIEDILKKEA.

Positions 9 to 245 (LKDVDVEFHG…PQQQLTKDFI (237 aa)) constitute an ABC transporter domain. 43–50 (GYSGAGKS) is a binding site for ATP.

Belongs to the ABC transporter superfamily. Methionine importer (TC 3.A.1.24) family. As to quaternary structure, the complex is composed of two ATP-binding proteins (MetN), two transmembrane proteins (MetI) and a solute-binding protein (MetQ).

It localises to the cell membrane. It catalyses the reaction L-methionine(out) + ATP + H2O = L-methionine(in) + ADP + phosphate + H(+). It carries out the reaction D-methionine(out) + ATP + H2O = D-methionine(in) + ADP + phosphate + H(+). Its function is as follows. Part of the ABC transporter complex MetNIQ involved in methionine import. Responsible for energy coupling to the transport system. This Lacticaseibacillus paracasei (strain ATCC 334 / BCRC 17002 / CCUG 31169 / CIP 107868 / KCTC 3260 / NRRL B-441) (Lactobacillus paracasei) protein is Methionine import ATP-binding protein MetN.